The sequence spans 384 residues: Cysteine desulfurase (384 aa).

Residues 74–75, asparagine 154, glutamine 180, and 200–202 contribute to the pyridoxal 5'-phosphate site; these read GT and SGH. At lysine 203 the chain carries N6-(pyridoxal phosphate)lysine. Position 238 (threonine 238) interacts with pyridoxal 5'-phosphate. The active-site Cysteine persulfide intermediate is cysteine 325. Cysteine 325 provides a ligand contact to [2Fe-2S] cluster.

The protein belongs to the class-V pyridoxal-phosphate-dependent aminotransferase family. NifS/IscS subfamily. Homodimer. Pyridoxal 5'-phosphate is required as a cofactor.

It catalyses the reaction (sulfur carrier)-H + L-cysteine = (sulfur carrier)-SH + L-alanine. In terms of biological role, catalyzes the removal of elemental sulfur atoms from cysteine to produce alanine. Seems to participate in the biosynthesis of the nitrogenase metalloclusters by providing the inorganic sulfur required for the Fe-S core formation. The sequence is that of Cysteine desulfurase from Rhodobacter capsulatus (Rhodopseudomonas capsulata).